Here is a 434-residue protein sequence, read N- to C-terminus: Histidinol dehydrogenase (434 aa).

Glu260 and His263 together coordinate Zn(2+). Active-site proton acceptor residues include Glu330 and His331. Zn(2+) is bound at residue His423.

It belongs to the histidinol dehydrogenase family. It depends on Zn(2+) as a cofactor.

It carries out the reaction L-histidinol + 2 NAD(+) + H2O = L-histidine + 2 NADH + 3 H(+). Its pathway is amino-acid biosynthesis; L-histidine biosynthesis; L-histidine from 5-phospho-alpha-D-ribose 1-diphosphate: step 9/9. Catalyzes the sequential NAD-dependent oxidations of L-histidinol to L-histidinaldehyde and then to L-histidine. This is Histidinol dehydrogenase (hisD) from Synechocystis sp. (strain ATCC 27184 / PCC 6803 / Kazusa).